The sequence spans 245 residues: tRNA pseudouridine synthase A 2 (245 aa).

Aspartate 53 acts as the Nucleophile in catalysis. Tyrosine 111 contacts substrate.

Belongs to the tRNA pseudouridine synthase TruA family. In terms of assembly, homodimer.

The enzyme catalyses uridine(38/39/40) in tRNA = pseudouridine(38/39/40) in tRNA. Functionally, formation of pseudouridine at positions 38, 39 and 40 in the anticodon stem and loop of transfer RNAs. This chain is tRNA pseudouridine synthase A 2, found in Bacillus cereus (strain ATCC 10987 / NRS 248).